A 160-amino-acid polypeptide reads, in one-letter code: MKLHELSDNDGAAKKRKRVGRGPGSGTGKMGGRGIKGQKSRSGVAIKGYEGGQMPLYQRLPKRGFNKPNRKAYAVVNLGLIQKFVDAGKIDASAAITEDALIASGLVRRKKDGIRVLAKGDVTGKLNIEVTGASKSAIEAVAKAGGSLTVTAPVAETSEA.

Residues 1 to 13 (MKLHELSDNDGAA) are compositionally biased toward basic and acidic residues. The tract at residues 1-42 (MKLHELSDNDGAAKKRKRVGRGPGSGTGKMGGRGIKGQKSRS) is disordered. Over residues 21 to 35 (RGPGSGTGKMGGRGI) the composition is skewed to gly residues.

This sequence belongs to the universal ribosomal protein uL15 family. Part of the 50S ribosomal subunit.

Functionally, binds to the 23S rRNA. In Roseobacter denitrificans (strain ATCC 33942 / OCh 114) (Erythrobacter sp. (strain OCh 114)), this protein is Large ribosomal subunit protein uL15.